A 534-amino-acid polypeptide reads, in one-letter code: CTP synthase (534 aa).

Positions 1 to 266 (MKTKFIFVTG…DEQVVEKLNI (266 aa)) are amidoligase domain. CTP is bound at residue Ser14. Position 14 (Ser14) interacts with UTP. Residues 15–20 (SIGKGL) and Asp72 each bind ATP. Positions 72 and 140 each coordinate Mg(2+). Residues 147–149 (DIE), 187–192 (KTKPTQ), and Lys223 each bind CTP. UTP is bound by residues 187–192 (KTKPTQ) and Lys223. The Glutamine amidotransferase type-1 domain occupies 292–534 (RIAIVGKYVN…IAAALHNIKA (243 aa)). Residue Gly354 participates in L-glutamine binding. Cys381 acts as the Nucleophile; for glutamine hydrolysis in catalysis. Residues 382–385 (LGMQ), Glu405, and Arg462 each bind L-glutamine. Active-site residues include His507 and Glu509.

Belongs to the CTP synthase family. Homotetramer.

The catalysed reaction is UTP + L-glutamine + ATP + H2O = CTP + L-glutamate + ADP + phosphate + 2 H(+). It catalyses the reaction L-glutamine + H2O = L-glutamate + NH4(+). The enzyme catalyses UTP + NH4(+) + ATP = CTP + ADP + phosphate + 2 H(+). It functions in the pathway pyrimidine metabolism; CTP biosynthesis via de novo pathway; CTP from UDP: step 2/2. With respect to regulation, allosterically activated by GTP, when glutamine is the substrate; GTP has no effect on the reaction when ammonia is the substrate. The allosteric effector GTP functions by stabilizing the protein conformation that binds the tetrahedral intermediate(s) formed during glutamine hydrolysis. Inhibited by the product CTP, via allosteric rather than competitive inhibition. Functionally, catalyzes the ATP-dependent amination of UTP to CTP with either L-glutamine or ammonia as the source of nitrogen. Regulates intracellular CTP levels through interactions with the four ribonucleotide triphosphates. In Geotalea uraniireducens (strain Rf4) (Geobacter uraniireducens), this protein is CTP synthase.